The sequence spans 158 residues: RNA pyrophosphohydrolase (158 aa).

One can recognise a Nudix hydrolase domain in the interval 8–152 (PYRPCAGVML…KRALYRGLIE (145 aa)). The Nudix box motif lies at 42-63 (GGIDEGEDAEKAAIRELGEETG).

The protein belongs to the Nudix hydrolase family. RppH subfamily. Requires a divalent metal cation as cofactor.

Accelerates the degradation of transcripts by removing pyrophosphate from the 5'-end of triphosphorylated RNA, leading to a more labile monophosphorylated state that can stimulate subsequent ribonuclease cleavage. This Sphingopyxis alaskensis (strain DSM 13593 / LMG 18877 / RB2256) (Sphingomonas alaskensis) protein is RNA pyrophosphohydrolase.